The chain runs to 367 residues: 2-aminoethylphosphonate--pyruvate transaminase (367 aa).

The residue at position 194 (Lys-194) is an N6-(pyridoxal phosphate)lysine.

This sequence belongs to the class-V pyridoxal-phosphate-dependent aminotransferase family. PhnW subfamily. As to quaternary structure, homodimer. Pyridoxal 5'-phosphate is required as a cofactor.

It catalyses the reaction (2-aminoethyl)phosphonate + pyruvate = phosphonoacetaldehyde + L-alanine. Functionally, involved in phosphonate degradation. This Salmonella dublin (strain CT_02021853) protein is 2-aminoethylphosphonate--pyruvate transaminase.